Consider the following 393-residue polypeptide: Cysteine protease ATG4B (393 aa).

N-acetylmethionine is present on Met1. Ser34 bears the Phosphoserine mark. Cys74 acts as the Nucleophile in catalysis. Cys189 carries the post-translational modification S-nitrosocysteine. Catalysis depends on residues Asp278 and His280. Cys292 and Cys301 each carry S-nitrosocysteine. Cys292 and Cys361 are oxidised to a cystine. A phosphoserine mark is found at Ser316 and Ser383. The short motif at 388–391 is the LIR element; it reads FEIL. Ser392 carries the post-translational modification Phosphoserine.

Belongs to the peptidase C54 family. Interacts with PFKP; promoting phosphorylation of ATG4B at Ser-34. Interacts with GBP7. Phosphorylation at Ser-383 and Ser-392 promotes autophagy by increasing protein delipidation activity without affecting proteolytic activation of ATG8 proteins. Phosphorylation at Ser-316 by ULK1 inhibits autophagy by decreasing both proteolytic activation and delipidation activities. Phosphorylation at Ser-316 is dephosphorylated by protein phosphatase 2A (PP2A). Phosphorylation at Ser-34 by AKT2 promotes its hydrolase activity, leading to increased proteolytic activation and delipidation of ATG8 family proteins. Phosphorylation at Ser-34 by AKT1 promotes mitochondrial localization and inhibition of the F1F0-ATP synthase activity, leading to elevation of mitochondrial reactive oxygen species (ROS). In terms of processing, ubiquitinated by RNF5, leading to its degradation by the proteasome. Post-translationally, S-nitrosylation in response to high glucose decreases both proteolytic activation and delipidation activities. O-glycosylated by OGT, leading to increase protease activity, thereby promoting the proteolytic activation of ATG8 family proteins. In terms of processing, forms reversible intrachain disulfide bonds in response to oxidative stress. Forms interchain disulfide bonds, leading to formation of homooligomers in response to oxidation.

The protein localises to the cytoplasm. Its subcellular location is the cytosol. It localises to the cytoplasmic vesicle. It is found in the autophagosome. The protein resides in the endoplasmic reticulum. The protein localises to the mitochondrion. The enzyme catalyses [protein]-C-terminal L-amino acid-glycyl-phosphatidylethanolamide + H2O = [protein]-C-terminal L-amino acid-glycine + a 1,2-diacyl-sn-glycero-3-phosphoethanolamine. It carries out the reaction [protein]-C-terminal L-amino acid-glycyl-phosphatidylserine + H2O = [protein]-C-terminal L-amino acid-glycine + a 1,2-diacyl-sn-glycero-3-phospho-L-serine. Its activity is regulated as follows. Inhibited by N-ethylmaleimide. Redox-regulated during autophagy since reducing conditions activate ATG4A whereas an oxidizing environment such as the presence of H(2)O(2) inhibits its activity. The cysteine protease activity compounds is inhibited by styrylquinoline compounds 4-28 and LV-320. Functionally, cysteine protease that plays a key role in autophagy by mediating both proteolytic activation and delipidation of ATG8 family proteins. Required for canonical autophagy (macroautophagy), non-canonical autophagy as well as for mitophagy. The protease activity is required for proteolytic activation of ATG8 family proteins: cleaves the C-terminal amino acid of ATG8 proteins MAP1LC3A, MAP1LC3B, MAP1LC3C, GABARAPL1, GABARAPL2 and GABARAP, to reveal a C-terminal glycine. Exposure of the glycine at the C-terminus is essential for ATG8 proteins conjugation to phosphatidylethanolamine (PE) and insertion to membranes, which is necessary for autophagy. Protease activity is also required to counteract formation of high-molecular weight conjugates of ATG8 proteins (ATG8ylation): acts as a deubiquitinating-like enzyme that removes ATG8 conjugated to other proteins, such as ATG3. In addition to the protease activity, also mediates delipidation of ATG8 family proteins. Catalyzes delipidation of PE-conjugated forms of ATG8 proteins during macroautophagy. Also involved in non-canonical autophagy, a parallel pathway involving conjugation of ATG8 proteins to single membranes at endolysosomal compartments, by catalyzing delipidation of ATG8 proteins conjugated to phosphatidylserine (PS). Compared to other members of the family (ATG4A, ATG4C or ATG4C), constitutes the major protein for proteolytic activation of ATG8 proteins, while it displays weaker delipidation activity than other ATG4 paralogs. Involved in phagophore growth during mitophagy independently of its protease activity and of ATG8 proteins: acts by regulating ATG9A trafficking to mitochondria and promoting phagophore-endoplasmic reticulum contacts during the lipid transfer phase of mitophagy. This is Cysteine protease ATG4B from Rattus norvegicus (Rat).